We begin with the raw amino-acid sequence, 534 residues long: Probable cytochrome c oxidase subunit 1 (534 aa).

Transmembrane regions (helical) follow at residues 35-55 (IMYIIFAIFAGVVGGLFSLLF), 76-96 (VLITVHAIIMVFFMIMPALFS), 97-117 (GFGNYFVPLLIGAPDMAFPRL), 120-140 (ISFWLLIPAFLLLISSTFIDG), 165-185 (VAIFSLHLTGLSSILGSINLI), 202-222 (PLFVWSILVTAFLIILAMPVL), 254-274 (LFWFFGHPEVYIVILPGFGIV), and 286-306 (IFGYQGMVGAMVIIGFVGFIV). H81 is a binding site for Fe(II)-heme a. Residues H260 and Y264 each coordinate Cu cation. Positions 260 to 264 (HPEVY) form a cross-link, 1'-histidyl-3'-tyrosine (His-Tyr). H309 and H310 together coordinate Cu cation. Helical transmembrane passes span 320–340 (ALIYFTAGTMIIAVPTGIKIF) and 357–377 (MLFAIGFIILFTIGGVTGIIL). H395 is a heme a3 binding site. Transmembrane regions (helical) follow at residues 396–416 (FHYTMSLGALFTAFAGFYYWF), 433–453 (FWITFIGVNLTFFPQHFLGLA), and 475–495 (IGAGISIFAAFYFVFIVFYTL). H397 contacts Fe(II)-heme a.

The protein belongs to the heme-copper respiratory oxidase family.

The protein resides in the cell membrane. The enzyme catalyses 4 Fe(II)-[cytochrome c] + O2 + 8 H(+)(in) = 4 Fe(III)-[cytochrome c] + 2 H2O + 4 H(+)(out). Its pathway is energy metabolism; oxidative phosphorylation. Its function is as follows. Cytochrome c oxidase is the component of the respiratory chain that catalyzes the reduction of oxygen to water. Subunits 1-3 form the functional core of the enzyme complex. CO I is the catalytic subunit of the enzyme. Electrons originating in cytochrome c are transferred via the copper A center of subunit 2 and heme A of subunit 1 to the bimetallic center formed by heme A3 and copper B. This Rickettsia prowazekii (strain Madrid E) protein is Probable cytochrome c oxidase subunit 1 (ctaD).